The sequence spans 591 residues: Aspartate--tRNA ligase (591 aa).

E173 is a binding site for L-aspartate. The segment at 197 to 200 (QLFK) is aspartate. R219 serves as a coordination point for L-aspartate. ATP is bound by residues 219-221 (RDE) and Q228. Residue H448 coordinates L-aspartate. E482 is an ATP binding site. R489 is an L-aspartate binding site. 534-537 (GLDR) provides a ligand contact to ATP.

It belongs to the class-II aminoacyl-tRNA synthetase family. Type 1 subfamily. In terms of assembly, homodimer.

It is found in the cytoplasm. It carries out the reaction tRNA(Asp) + L-aspartate + ATP = L-aspartyl-tRNA(Asp) + AMP + diphosphate. Functionally, catalyzes the attachment of L-aspartate to tRNA(Asp) in a two-step reaction: L-aspartate is first activated by ATP to form Asp-AMP and then transferred to the acceptor end of tRNA(Asp). The polypeptide is Aspartate--tRNA ligase (Shewanella frigidimarina (strain NCIMB 400)).